Here is a 279-residue protein sequence, read N- to C-terminus: Very long chain fatty acid elongase 1 (279 aa).

Methionine 1 carries the post-translational modification N-acetylmethionine. 7 helical membrane-spanning segments follow: residues 23-43 (PLMG…YFIL), 61-81 (FMIV…YEFL), 110-130 (VAWL…IFIL), 137-154 (VTFL…SWWW), 176-196 (VVMY…PYLW), 203-223 (AIQL…YFMP), and 231-251 (IIIH…SNFW). Residues 275 to 279 (KVKAN) carry the Di-lysine motif motif.

This sequence belongs to the ELO family. ELOVL1 subfamily. Interacts with LASS2, TECR and HSD17B12. Interacts with TECR. In terms of tissue distribution, expressed in a broad variety of tissues. Highly expressed in stomach, lung, kidney, skin and intestine. Moderately expressed in white adipose tissue, liver, spleen, brain, brown adipose tissue, heart and muscle. Weakly expressed in testis.

It localises to the endoplasmic reticulum membrane. It carries out the reaction a very-long-chain acyl-CoA + malonyl-CoA + H(+) = a very-long-chain 3-oxoacyl-CoA + CO2 + CoA. The enzyme catalyses eicosanoyl-CoA + malonyl-CoA + H(+) = 3-oxodocosanoyl-CoA + CO2 + CoA. The catalysed reaction is docosanoyl-CoA + malonyl-CoA + H(+) = 3-oxotetracosanoyl-CoA + CO2 + CoA. It catalyses the reaction tetracosanoyl-CoA + malonyl-CoA + H(+) = 3-oxohexacosanoyl-CoA + CO2 + CoA. It carries out the reaction (11Z)-eicosenoyl-CoA + malonyl-CoA + H(+) = 3-oxo-(13Z)-docosenoyl-CoA + CO2 + CoA. The enzyme catalyses (13Z)-docosenoyl-CoA + malonyl-CoA + H(+) = 3-oxo-(15Z)-tetracosenoyl-CoA + CO2 + CoA. It functions in the pathway lipid metabolism; fatty acid biosynthesis. In terms of biological role, catalyzes the first and rate-limiting reaction of the four reactions that constitute the long-chain fatty acids elongation cycle. This endoplasmic reticulum-bound enzymatic process allows the addition of 2 carbons to the chain of long- and very long-chain fatty acids (VLCFAs) per cycle. Condensing enzyme that exhibits activity toward saturated and monounsaturated acyl-CoA substrates, with the highest activity towards C22:0 acyl-CoA. May participate in the production of both saturated and monounsaturated VLCFAs of different chain lengths that are involved in multiple biological processes as precursors of membrane lipids and lipid mediators. Important for saturated C24:0 and monounsaturated C24:1 sphingolipid synthesis. Indirectly inhibits RPE65 via production of VLCFAs. The protein is Very long chain fatty acid elongase 1 of Mus musculus (Mouse).